Consider the following 1479-residue polypeptide: Peroxidasin homolog (1479 aa).

The first 26 residues, 1–26, serve as a signal peptide directing secretion; it reads MAKRSRGPGRRCLLALVLFCAWGTLA. One can recognise an LRRNT domain in the interval 27–63; sequence VVAQKPGAGCPSRCLCFRTTVRCMHLLLEAVPAVAPQ. Cystine bridges form between cysteine 36/cysteine 42 and cysteine 40/cysteine 49. LRR repeat units follow at residues 61 to 84, 85 to 108, 110 to 132, 133 to 156, 157 to 180, and 182 to 204; these read APQT…AFRR, LRNL…AFED, ENLK…AFKG, LASL…SFQH, LPKL…TFNH, and ESMK…LWLA. An LRRCT domain is found at 192–244; the sequence is NTLHCDCEILWLADLLKTYAESGNAQAAAICEYPRRIQGRSVATITPEELNCE. 6 disulfide bridges follow: cysteine 196/cysteine 243, cysteine 198/cysteine 222, cysteine 267/cysteine 317, cysteine 363/cysteine 412, cysteine 454/cysteine 502, and cysteine 546/cysteine 594. Ig-like C2-type domains lie at 246–332, 342–428, 433–520, and 521–610; these read PRIT…QEVT, PTFV…AFII, PQFT…LTVQ, and PRVT…MVLS. N-linked (GlcNAc...) asparagine glycans are attached at residues asparagine 640, asparagine 699, asparagine 719, and asparagine 731. Cystine bridges form between cysteine 723/cysteine 885, cysteine 732/cysteine 748, cysteine 847/cysteine 857, and cysteine 851/cysteine 875. Aspartate 826 contributes to the heme b binding site. Residue histidine 827 is the Proton acceptor of the active site. Aspartate 828 contributes to the Ca(2+) binding site. N-linked (GlcNAc...) asparagine glycosylation is present at asparagine 865. The Ca(2+) site is built by threonine 907, tyrosine 909, aspartate 911, and serine 913. The cysteines at positions 959 and 970 are disulfide-linked. A glycan (N-linked (GlcNAc...) asparagine) is linked at asparagine 964. The heme b site is built by glutamate 980 and histidine 1074. Residues 1151–1175 form an LRR 7 repeat; sequence ALDLAAINIQRGRDHGIPPYHDYRV. Tyrosine 1176 bears the Phosphotyrosine mark. Disulfide bonds link cysteine 1177–cysteine 1234 and cysteine 1275–cysteine 1301. Asparagine 1178 carries an N-linked (GlcNAc...) asparagine glycan. Serine 1180 bears the Phosphoserine mark. One copy of the LRR 8 repeat lies at 1270-1291; it reads LARILCDNADNITRVQSDVFRV. N-linked (GlcNAc...) asparagine glycosylation is found at asparagine 1280, asparagine 1368, and asparagine 1425. Residues 1315–1411 form a required in homotrimerization region; sequence CCEDCRTRGQ…QIKKLESRLS (97 aa). Positions 1342-1380 are disordered; that stretch reads YQEDKPTKKTRPRKIPSVGRQGEHLSNSTSAFSTRSDAS. Positions 1365–1380 are enriched in polar residues; the sequence is HLSNSTSAFSTRSDAS. A VWFC domain is found at 1413–1471; it reads TECVDAGGESHANNTKWKKDACTICECKDGQVTCFVEACPPATCAVPVNIPGACCPVCL.

It belongs to the peroxidase family. XPO subfamily. In terms of assembly, homotrimer; disulfide-linked. The homotrimer form is predominant. Homooligomer; disulfide-linked. Oligomerization occurs intracellularly before C-terminal proteolytic cleavage. Interacts with PXDNL; this interaction inhibits the peroxidase activity of PXDN. It depends on Ca(2+) as a cofactor. Requires heme b as cofactor. In terms of processing, glycosylated. Four sites are completely N-glycosylated (Asn-640, Asn-731, Asn-865 and Asn-1425), whereas the others are found partially glycosylated. Post-translationally, processed by FURIN and the proteolytic processing largely depends on the peroxidase activity of PXDN. The proteolytic cleavage occurs after intracellular homotrimerization and releases into the extracellular matrix a large, catalytically active fragment and a smaller fragment consisting primarily of the C-terminal VWFC domain. The processing enhances both peroxidase activity and sulfilimine cross-links formation. Expressed at higher levels in heart, lung, ovary, spleen, intestine and placenta, and at lower levels in liver, colon, pancreas, kidney, thymus, skeletal muscle and prostate. Expressed in tumors such as melanoma, breast cancer, ovarian cancer and glioblastoma. A shorter form probably lacking the signal sequence is found in testis and in EB1 cells undergoing p53/TP53-dependent apoptosis.

It is found in the secreted. It localises to the extracellular space. The protein resides in the extracellular matrix. The protein localises to the endoplasmic reticulum. Its subcellular location is the cell surface. It is found in the basement membrane. It catalyses the reaction L-lysyl-[collagen] + L-methionyl-[collagen] + H2O2 = [collagen]-L-lysyl-N-S-L-methionyl-[collagen] + 2 H2O + H(+). The enzyme catalyses bromide + H2O2 = hypobromite + H2O. The catalysed reaction is L-lysyl-[collagen] + L-methionyl-[collagen] + hypobromite = [collagen]-L-lysyl-N-S-L-methionyl-[collagen] + bromide + H2O + H(+). It carries out the reaction L-tyrosyl-[protein] + bromide + H2O2 + H(+) = 3-bromo-L-tyrosyl-[protein] + 2 H2O. It catalyses the reaction hypobromite + L-tyrosyl-[protein] + H(+) = 3-bromo-L-tyrosyl-[protein] + H2O. With respect to regulation, the hypobromous acid formation is activated by increasing nitrite concentrations and inhibited by increasing urate concentrations. In terms of biological role, catalyzes the two-electron oxidation of bromide by hydrogen peroxide and generates hypobromite as a reactive intermediate which mediates the formation of sulfilimine cross-links between methionine and hydroxylysine residues within an uncross-linked collagen IV/COL4A1 NC1 hexamer. In turns, directly contributes to the collagen IV network-dependent fibronectin/FN and laminin assembly, which is required for full extracellular matrix (ECM)-mediated signaling. Thus, sulfilimine cross-links are essential for growth factor-induced cell proliferation and survival in endothelial cells, an event essential to basement membrane integrity. In addition, through the bromide oxidation, may promote tubulogenesis and induce angiogenesis through ERK1/2, Akt, and FAK pathways. Moreover brominates alpha2 collagen IV chain/COL4A2 at 'Tyr-1485' and leads to bromine enrichment of the basement membranes. In vitro, can also catalyze the two-electron oxidation of thiocyanate and iodide and these two substrates could effectively compete with bromide and thus inhibit the formation of sulfilimine bonds. Binds laminins. May play a role in the organization of eyeball structure and lens development during eye development. This is Peroxidasin homolog from Homo sapiens (Human).